A 307-amino-acid polypeptide reads, in one-letter code: ATP synthase gamma chain (307 aa).

This sequence belongs to the ATPase gamma chain family. In terms of assembly, F-type ATPases have 2 components, CF(1) - the catalytic core - and CF(0) - the membrane proton channel. CF(1) has five subunits: alpha(3), beta(3), gamma(1), delta(1), epsilon(1). CF(0) has three main subunits: a, b and c.

It is found in the cell membrane. Produces ATP from ADP in the presence of a proton gradient across the membrane. The gamma chain is believed to be important in regulating ATPase activity and the flow of protons through the CF(0) complex. The sequence is that of ATP synthase gamma chain from Bifidobacterium longum (strain DJO10A).